The sequence spans 185 residues: MAEVKYEPRLKKEYVARIRAALQEKFSYANEMQIPKLDKIVINMGVGEATADSKKPTVAAADLAAIAGQKPVITHARNSIAGFKVRENMPIGAKVTLRGARMYEFLDRLVNIALPRVRDFRGLNPKSFDGRGNFAMGIKEHIVFPEINYDKVDQMWGMDIIVCTTATTDDEARALLKEFNFPFRQ.

It belongs to the universal ribosomal protein uL5 family. In terms of assembly, part of the 50S ribosomal subunit; part of the 5S rRNA/L5/L18/L25 subcomplex. Contacts the 5S rRNA and the P site tRNA. Forms a bridge to the 30S subunit in the 70S ribosome.

Functionally, this is one of the proteins that bind and probably mediate the attachment of the 5S RNA into the large ribosomal subunit, where it forms part of the central protuberance. In the 70S ribosome it contacts protein S13 of the 30S subunit (bridge B1b), connecting the 2 subunits; this bridge is implicated in subunit movement. Contacts the P site tRNA; the 5S rRNA and some of its associated proteins might help stabilize positioning of ribosome-bound tRNAs. This chain is Large ribosomal subunit protein uL5, found in Rhizobium rhizogenes (strain K84 / ATCC BAA-868) (Agrobacterium radiobacter).